A 93-amino-acid chain; its full sequence is Alpha-defensin 26 (93 aa).

The first 19 residues, 1 to 19, serve as a signal peptide directing secretion; the sequence is MKTLVLLSALFLLAFQVQA. The propeptide occupies 20-58; that stretch reads DPIQNTDEETNTEVQPQEEDQAVSVSFGNPEGSDLQEES. Residues 24–55 form a disordered region; it reads NTDEETNTEVQPQEEDQAVSVSFGNPEGSDLQ. The span at 25–40 shows a compositional bias: acidic residues; sequence TDEETNTEVQPQEEDQ. Disulfide bonds link Cys64/Cys92, Cys66/Cys81, and Cys71/Cys91.

This sequence belongs to the alpha-defensin family.

The protein resides in the secreted. May have microbicidal activities. This chain is Alpha-defensin 26 (Defa26), found in Mus musculus (Mouse).